Reading from the N-terminus, the 341-residue chain is HTH-type transcriptional repressor PurR (341 aa).

Positions 2-56 constitute an HTH lacI-type domain; that stretch reads ATIKDVAKHAGVSTTTVSHVINKTRFVAEDTKAAVWAAIKALNYSPSAVARSLKV. Positions 4 to 23 form a DNA-binding region, H-T-H motif; that stretch reads IKDVAKHAGVSTTTVSHVIN. The DNA-binding element occupies 48–56; that stretch reads SAVARSLKV. Hypoxanthine-binding residues include Y73, R190, T192, F221, and D275.

Homodimer.

The protein operates within purine metabolism; purine nucleotide biosynthesis [regulation]. Its function is as follows. Is the main repressor of the genes involved in the de novo synthesis of purine nucleotides, regulating purB, purC, purEK, purF, purHD, purL, purMN and guaBA expression. PurR is allosterically activated to bind its cognate DNA by binding the purine corepressors, hypoxanthine or guanine, thereby effecting transcription repression. This is HTH-type transcriptional repressor PurR from Photorhabdus laumondii subsp. laumondii (strain DSM 15139 / CIP 105565 / TT01) (Photorhabdus luminescens subsp. laumondii).